The sequence spans 287 residues: Phosphatidylserine decarboxylase proenzyme (287 aa).

Catalysis depends on charge relay system; for autoendoproteolytic cleavage activity residues D90, H147, and S252. The Schiff-base intermediate with substrate; via pyruvic acid; for decarboxylase activity role is filled by S252. S252 bears the Pyruvic acid (Ser); by autocatalysis mark.

The protein belongs to the phosphatidylserine decarboxylase family. PSD-B subfamily. Prokaryotic type I sub-subfamily. As to quaternary structure, heterodimer of a large membrane-associated beta subunit and a small pyruvoyl-containing alpha subunit. Requires pyruvate as cofactor. Post-translationally, is synthesized initially as an inactive proenzyme. Formation of the active enzyme involves a self-maturation process in which the active site pyruvoyl group is generated from an internal serine residue via an autocatalytic post-translational modification. Two non-identical subunits are generated from the proenzyme in this reaction, and the pyruvate is formed at the N-terminus of the alpha chain, which is derived from the carboxyl end of the proenzyme. The autoendoproteolytic cleavage occurs by a canonical serine protease mechanism, in which the side chain hydroxyl group of the serine supplies its oxygen atom to form the C-terminus of the beta chain, while the remainder of the serine residue undergoes an oxidative deamination to produce ammonia and the pyruvoyl prosthetic group on the alpha chain. During this reaction, the Ser that is part of the protease active site of the proenzyme becomes the pyruvoyl prosthetic group, which constitutes an essential element of the active site of the mature decarboxylase.

Its subcellular location is the cell membrane. It carries out the reaction a 1,2-diacyl-sn-glycero-3-phospho-L-serine + H(+) = a 1,2-diacyl-sn-glycero-3-phosphoethanolamine + CO2. It participates in phospholipid metabolism; phosphatidylethanolamine biosynthesis; phosphatidylethanolamine from CDP-diacylglycerol: step 2/2. Functionally, catalyzes the formation of phosphatidylethanolamine (PtdEtn) from phosphatidylserine (PtdSer). In Pseudomonas entomophila (strain L48), this protein is Phosphatidylserine decarboxylase proenzyme.